We begin with the raw amino-acid sequence, 307 residues long: Ribonuclease Z (307 aa).

H61, H63, D65, H66, H138, D207, and H265 together coordinate Zn(2+). The active-site Proton acceptor is the D65.

This sequence belongs to the RNase Z family. In terms of assembly, homodimer. The cofactor is Zn(2+).

It catalyses the reaction Endonucleolytic cleavage of RNA, removing extra 3' nucleotides from tRNA precursor, generating 3' termini of tRNAs. A 3'-hydroxy group is left at the tRNA terminus and a 5'-phosphoryl group is left at the trailer molecule.. Zinc phosphodiesterase, which displays some tRNA 3'-processing endonuclease activity. Probably involved in tRNA maturation, by removing a 3'-trailer from precursor tRNA. The polypeptide is Ribonuclease Z (Methanothermobacter thermautotrophicus (strain ATCC 29096 / DSM 1053 / JCM 10044 / NBRC 100330 / Delta H) (Methanobacterium thermoautotrophicum)).